The primary structure comprises 398 residues: 1-deoxy-D-xylulose 5-phosphate reductoisomerase (398 aa).

Residues Thr10, Gly11, Ser12, Ile13, Gly36, Asn38, and Asn124 each coordinate NADPH. 1-deoxy-D-xylulose 5-phosphate is bound at residue Lys125. NADPH is bound at residue Glu126. Mn(2+) is bound at residue Asp150. Positions 151, 152, 186, and 209 each coordinate 1-deoxy-D-xylulose 5-phosphate. Position 152 (Glu152) interacts with Mn(2+). Gly215 serves as a coordination point for NADPH. 4 residues coordinate 1-deoxy-D-xylulose 5-phosphate: Ser222, Asn227, Lys228, and Glu231. Glu231 lines the Mn(2+) pocket.

It belongs to the DXR family. In terms of assembly, homodimer. Mg(2+) serves as cofactor. Requires Mn(2+) as cofactor.

It catalyses the reaction 2-C-methyl-D-erythritol 4-phosphate + NADP(+) = 1-deoxy-D-xylulose 5-phosphate + NADPH + H(+). The protein operates within isoprenoid biosynthesis; isopentenyl diphosphate biosynthesis via DXP pathway; isopentenyl diphosphate from 1-deoxy-D-xylulose 5-phosphate: step 1/6. Functionally, catalyzes the NADPH-dependent rearrangement and reduction of 1-deoxy-D-xylulose-5-phosphate (DXP) to 2-C-methyl-D-erythritol 4-phosphate (MEP). In Pectobacterium atrosepticum (strain SCRI 1043 / ATCC BAA-672) (Erwinia carotovora subsp. atroseptica), this protein is 1-deoxy-D-xylulose 5-phosphate reductoisomerase.